Here is a 187-residue protein sequence, read N- to C-terminus: Adenine phosphoribosyltransferase (187 aa).

Belongs to the purine/pyrimidine phosphoribosyltransferase family. In terms of assembly, homodimer.

It localises to the cytoplasm. The catalysed reaction is AMP + diphosphate = 5-phospho-alpha-D-ribose 1-diphosphate + adenine. Its pathway is purine metabolism; AMP biosynthesis via salvage pathway; AMP from adenine: step 1/1. In terms of biological role, catalyzes a salvage reaction resulting in the formation of AMP, that is energically less costly than de novo synthesis. The polypeptide is Adenine phosphoribosyltransferase (Burkholderia pseudomallei (strain 668)).